Here is a 266-residue protein sequence, read N- to C-terminus: Tryptophan synthase alpha chain (266 aa).

Catalysis depends on proton acceptor residues E47 and D58.

Belongs to the TrpA family. In terms of assembly, tetramer of two alpha and two beta chains.

It is found in the plastid. The protein resides in the chloroplast. It catalyses the reaction (1S,2R)-1-C-(indol-3-yl)glycerol 3-phosphate + L-serine = D-glyceraldehyde 3-phosphate + L-tryptophan + H2O. Its pathway is amino-acid biosynthesis; L-tryptophan biosynthesis; L-tryptophan from chorismate: step 5/5. Its function is as follows. The alpha subunit is responsible for the aldol cleavage of indoleglycerol phosphate to indole and glyceraldehyde 3-phosphate. This is Tryptophan synthase alpha chain from Cyanidium caldarium (Red alga).